The chain runs to 715 residues: Fatty acid oxidation complex subunit alpha (715 aa).

The segment at 1–190 (MIYEGKAITV…KVGAVDAVVA (190 aa)) is enoyl-CoA hydratase/isomerase. Residue Asp297 participates in substrate binding. A 3-hydroxyacyl-CoA dehydrogenase region spans residues 312–715 (KDVKQAAVLG…MAKNGQSFFG (404 aa)). Residues Met325, Asp344, 401-403 (VVE), Lys408, and Ser430 contribute to the NAD(+) site. The For 3-hydroxyacyl-CoA dehydrogenase activity role is filled by His451. Asn454 lines the NAD(+) pocket. Residues Asn501 and Tyr660 each coordinate substrate.

In the N-terminal section; belongs to the enoyl-CoA hydratase/isomerase family. The protein in the C-terminal section; belongs to the 3-hydroxyacyl-CoA dehydrogenase family. Heterotetramer of two alpha chains (FadB) and two beta chains (FadA).

The catalysed reaction is a (3S)-3-hydroxyacyl-CoA + NAD(+) = a 3-oxoacyl-CoA + NADH + H(+). It catalyses the reaction a (3S)-3-hydroxyacyl-CoA = a (2E)-enoyl-CoA + H2O. The enzyme catalyses a 4-saturated-(3S)-3-hydroxyacyl-CoA = a (3E)-enoyl-CoA + H2O. It carries out the reaction (3S)-3-hydroxybutanoyl-CoA = (3R)-3-hydroxybutanoyl-CoA. The catalysed reaction is a (3Z)-enoyl-CoA = a 4-saturated (2E)-enoyl-CoA. It catalyses the reaction a (3E)-enoyl-CoA = a 4-saturated (2E)-enoyl-CoA. Its pathway is lipid metabolism; fatty acid beta-oxidation. Functionally, involved in the aerobic and anaerobic degradation of long-chain fatty acids via beta-oxidation cycle. Catalyzes the formation of 3-oxoacyl-CoA from enoyl-CoA via L-3-hydroxyacyl-CoA. It can also use D-3-hydroxyacyl-CoA and cis-3-enoyl-CoA as substrate. The protein is Fatty acid oxidation complex subunit alpha of Pseudomonas fluorescens (strain Pf0-1).